The sequence spans 20 residues: Elastase (20 aa).

The region spanning 1-20 (VVGGEVARAHSWPWQISLQY) is the Peptidase S1 domain.

This sequence belongs to the peptidase S1 family. Elastase subfamily.

Digests most rapidly at the C-terminal side of alanine residues, but also cleaves at valine and leucine residues. This Gadus morhua (Atlantic cod) protein is Elastase.